Reading from the N-terminus, the 807-residue chain is Glycerol-3-phosphate acyltransferase (807 aa).

An HXXXXD motif motif is present at residues 308–313 (CHRSHM).

It belongs to the GPAT/DAPAT family.

The protein resides in the cell inner membrane. The enzyme catalyses sn-glycerol 3-phosphate + an acyl-CoA = a 1-acyl-sn-glycero-3-phosphate + CoA. The protein operates within phospholipid metabolism; CDP-diacylglycerol biosynthesis; CDP-diacylglycerol from sn-glycerol 3-phosphate: step 1/3. In Shewanella amazonensis (strain ATCC BAA-1098 / SB2B), this protein is Glycerol-3-phosphate acyltransferase.